A 396-amino-acid chain; its full sequence is Protein btn1 (396 aa).

The next 8 membrane-spanning stretches (helical) occupy residues 15–35 (CFLI…SAAL), 45–65 (GVVL…ASIL), 76–96 (IGFC…SSSV), 138–158 (LAGL…NFSV), 161–181 (TLII…FVLP), 234–254 (FLVY…LLFP), 296–316 (LAIT…LYLT), and 321–341 (FVLF…VNVY).

It belongs to the battenin family.

The protein resides in the endoplasmic reticulum membrane. Its subcellular location is the vacuole membrane. In terms of biological role, involved in vacuolar transport and vacuole pH homeostasis. Also required for cytokinesis. This Schizosaccharomyces pombe (strain 972 / ATCC 24843) (Fission yeast) protein is Protein btn1.